Consider the following 91-residue polypeptide: Cell division topological specificity factor (91 aa).

This sequence belongs to the MinE family.

Prevents the cell division inhibition by proteins MinC and MinD at internal division sites while permitting inhibition at polar sites. This ensures cell division at the proper site by restricting the formation of a division septum at the midpoint of the long axis of the cell. This Thermoanaerobacter pseudethanolicus (strain ATCC 33223 / 39E) (Clostridium thermohydrosulfuricum) protein is Cell division topological specificity factor.